The chain runs to 59 residues: MAKLKITLVKSLIGRPESQRVTVRTLGLTRTNSSVIKEDTPQIRGMINKVAHLLKVEEA.

Belongs to the universal ribosomal protein uL30 family. In terms of assembly, part of the 50S ribosomal subunit.

In Pelotomaculum thermopropionicum (strain DSM 13744 / JCM 10971 / SI), this protein is Large ribosomal subunit protein uL30.